The following is a 482-amino-acid chain: BTB/POZ domain and ankyrin repeat-containing protein NOOT1 (482 aa).

Positions 25-107 constitute a BTB domain; the sequence is SDVVFSVEGR…LYSGQVSIVP (83 aa). The segment at 113–127 adopts a C2HC NPR-type zinc-finger fold; that stretch reads RPNCGDRGCWHTHCT. Cys116, Cys121, His123, and Cys126 together coordinate Zn(2+). ANK repeat units lie at residues 249–278, 279–308, 313–342, and 346–380; these read QKIR…LNLD, EALA…DVNF, TGKT…DPNV, and DGVT…KLRL. Positions 395-434 are disordered; sequence EEGNNNNSNNNNNATASSATNMYPHHNMNEDHHHSHNNNN. Low complexity predominate over residues 398-415; it reads NNNNSNNNNNATASSATN.

The protein belongs to the plant 'ANKYRIN-BTB/POZ' family. 'NOOT-BOP-COCH-like' (NBCL) subfamily. Homodimer. As to expression, expressed in the shoot apical meristem (SAM) at the base of the developing leaf where stipules are formed. Associated with functional and vestigial abscission zones (AZs), including pulvini.

The protein localises to the nucleus. The protein resides in the cytoplasm. Its subcellular location is the cell membrane. Its pathway is protein modification; protein ubiquitination. Its function is as follows. May act as a substrate-specific adapter of an E3 ubiquitin-protein ligase complex (CUL3-RBX1-BTB) which mediates the ubiquitination and subsequent proteasomal degradation of target proteins. Transcriptional co-regulator involved in the promotion of leaf and floral meristem fate and determinacy. Promotes normal stipule growth and development. Required for the abscission of senescent organs, probably by regulating the cell wall disorganization in abscission zones (AZs, e.g. pulvini at the base of leaves). Involved in the coordination of the symbiotic nodule developmental program. Promotes the formation of root nodules by interacting directly with APP1 to modulate the expression of the nuclear transcription factor Y subunit (NF-YA1), a key nodulin. Necessary for the robust maintenance of nodule identity throughout the nodule developmental program. Involved in the regulation of indeterminate nodule identity in association with NOOT2. This chain is BTB/POZ domain and ankyrin repeat-containing protein NOOT1, found in Medicago truncatula (Barrel medic).